The primary structure comprises 130 residues: Small ribosomal subunit protein uS11 (130 aa).

It belongs to the universal ribosomal protein uS11 family. In terms of assembly, part of the 30S ribosomal subunit. Interacts with proteins S7 and S18. Binds to IF-3.

Its function is as follows. Located on the platform of the 30S subunit, it bridges several disparate RNA helices of the 16S rRNA. Forms part of the Shine-Dalgarno cleft in the 70S ribosome. The sequence is that of Small ribosomal subunit protein uS11 from Prochlorococcus marinus (strain MIT 9313).